The sequence spans 793 residues: Ribosome biogenesis protein BOP1 homolog (793 aa).

Positions 1–11 (MTKKLTLKRKG) are enriched in basic residues. The tract at residues 1–168 (MTKKLTLKRK…DSDTSDEEDI (168 aa)) is disordered. Composition is skewed to acidic residues over residues 44-53 (EDTTDDEGID), 60-72 (SSEDLEFESDEEG), and 83-116 (SSEEEDDDGDEEGEEEDEEEDDSEDGESADDGDE). The span at 117-129 (EKPTTSKQNKSED) shows a compositional bias: basic and acidic residues. Over residues 133-143 (SSKVSKKTQPP) the composition is skewed to polar residues. Over residues 146–161 (DLVKRDPSHPEYHDSD) the composition is skewed to basic and acidic residues. 7 WD repeats span residues 454–495 (GHTD…RTIE), 497–535 (EDVVRCVAWCPNAKLSIIAVATGNRLLLINPKVGDKVLV), 579–621 (NHFK…SQIP), 624–662 (KSKGLIQCVLFHPVKPCFFVATQHNIRIYDLVKQELVKK), 665–704 (TNSKWISGMSIHPKGDNLLVSTYDKKMLWFDLDLSTKPYQ), 708–747 (LHRNAVRSVAFHLRYPLFASGSDDQAVIVSHGMVYNDLLQ), and 763–793 (REDFGVLDVNWHPIQPWIFSTGADCTIRLYT).

Belongs to the WD repeat BOP1/ERB1 family.

The protein localises to the nucleus. It localises to the nucleolus. Its subcellular location is the nucleoplasm. Its function is as follows. Required for maturation of ribosomal RNAs and formation of the large ribosomal subunit. The polypeptide is Ribosome biogenesis protein BOP1 homolog (Drosophila ananassae (Fruit fly)).